Consider the following 122-residue polypeptide: MSTQPLLQTTPGKRIALPVRVEPKVFFANERTFLSWLSFAVVLGGLSVGLLNFGDRIGKISAGLFTIVAIGTMGYALGIYHWRASAIRRRGSGPYDDRLGPTILCFVLLAAIITNFVLRMLF.

The Cytoplasmic segment spans residues 1 to 32 (MSTQPLLQTTPGKRIALPVRVEPKVFFANERT). Residues 33-53 (FLSWLSFAVVLGGLSVGLLNF) traverse the membrane as a helical segment. The Vacuolar segment spans residues 54–59 (GDRIGK). Residues 60–80 (ISAGLFTIVAIGTMGYALGIY) traverse the membrane as a helical segment. The Cytoplasmic segment spans residues 81 to 101 (HWRASAIRRRGSGPYDDRLGP). A helical transmembrane segment spans residues 102-122 (TILCFVLLAAIITNFVLRMLF).

This sequence belongs to the VTC1 family. The VTC core complex is an integral membrane heterooligomer composed of at least the catalytic subunit vtc4 and the accessory subunits vtc1 and vtc2. vtc1 is a small membrane protein without hydrophilic domain. Vtc2 and vtc4 are related and have 2 hydrophilic domains that face the cytosol, an N-terminal SPX domain and the central core domain. The central core in vtc4 is the catalytic domain. Vtc1 interacts with GTP-bound Ras-like cdc42, which is subsequently inactivated.

It localises to the vacuole membrane. In terms of biological role, accessory subunit of the vacuolar transporter chaperone (VTC) complex. The VTC complex acts as a vacuolar polyphosphate polymerase that catalyzes the synthesis of inorganic polyphosphate (polyP) via transfer of phosphate from ATP to a growing polyP chain, releasing ADP. VTC exposes its catalytic domain vtc4 to the cytosol, where the growing polyP chain winds through a tunnel-shaped pocket, integrating cytoplasmic polymer synthesis with polyP membrane translocation. The VTC complex carries 9 vacuolar transmembrane domains, which are likely to constitute the translocation channel into the organelle lumen. PolyP synthesis is tightly coupled to its transport into the vacuole lumen, in order to avoid otherwise toxic intermediates in the cytosol, and it depends on the proton gradient across the membrane, formed by V-ATPase. Vtc1 contributes only 3 transmembrane domains to the complex. The VTC complex also plays a role in vacuolar membrane fusion. Involved in the control of cell polarity. The protein is Vacuolar transporter chaperone complex subunit 1 of Schizosaccharomyces pombe (strain 972 / ATCC 24843) (Fission yeast).